The primary structure comprises 571 residues: uncharacterized protein (571 aa).

The interval 1 to 25 (MAPSVATSLKAEILPSPRTSSPSSN) is disordered. The FAD-binding FR-type domain maps to 135–389 (FSVFPAPILD…RGLHKNAFAT (255 aa)). The segment at 447–479 (NPLQKSSDDDASSTVSQQTETEMDSFEVKKDGT) is disordered.

Belongs to the flavoprotein pyridine nucleotide cytochrome reductase family. Requires FAD as cofactor.

This is an uncharacterized protein from Schizosaccharomyces pombe (strain 972 / ATCC 24843) (Fission yeast).